The chain runs to 79 residues: Sec-independent protein translocase protein TatA (79 aa).

A helical transmembrane segment spans residues 1 to 21 (MGGLQPWHWVIVIAVFVLLFG). A compositionally biased stretch (basic and acidic residues) spans 43 to 52 (IKEMQSEGKS). The tract at residues 43–79 (IKEMQSEGKSDNPPATPITSERVDTNPTAEQPDKRSA) is disordered.

Belongs to the TatA/E family. The Tat system comprises two distinct complexes: a TatABC complex, containing multiple copies of TatA, TatB and TatC subunits, and a separate TatA complex, containing only TatA subunits. Substrates initially bind to the TatABC complex, which probably triggers association of the separate TatA complex to form the active translocon.

It is found in the cell membrane. In terms of biological role, part of the twin-arginine translocation (Tat) system that transports large folded proteins containing a characteristic twin-arginine motif in their signal peptide across membranes. TatA could form the protein-conducting channel of the Tat system. The polypeptide is Sec-independent protein translocase protein TatA (Mycobacterium sp. (strain JLS)).